Here is a 399-residue protein sequence, read N- to C-terminus: Enoyl-[acyl-carrier-protein] reductase [NADH] (399 aa).

Residues 48–53, 74–75, 111–112, and 139–140 each bind NAD(+); these read GASTGY, FE, DA, and LA. Tyr225 contributes to the substrate binding site. The Proton donor role is filled by Tyr235. NAD(+)-binding positions include Lys244 and 273–275; that span reads VVT.

It belongs to the TER reductase family. As to quaternary structure, monomer.

It catalyses the reaction a 2,3-saturated acyl-[ACP] + NAD(+) = a (2E)-enoyl-[ACP] + NADH + H(+). Its pathway is lipid metabolism; fatty acid biosynthesis. In terms of biological role, involved in the final reduction of the elongation cycle of fatty acid synthesis (FAS II). Catalyzes the reduction of a carbon-carbon double bond in an enoyl moiety that is covalently linked to an acyl carrier protein (ACP). In Serratia proteamaculans (strain 568), this protein is Enoyl-[acyl-carrier-protein] reductase [NADH].